A 520-amino-acid polypeptide reads, in one-letter code: Cilia- and flagella-associated protein 157 (520 aa).

Positions 1–22 (MAPKKSVSKAGKELEVKKKGGK) are disordered. Basic and acidic residues predominate over residues 10–22 (AGKELEVKKKGGK). Coiled coils occupy residues 33–189 (LAKE…LEKK) and 236–372 (LQMA…QATS). Residues 416–453 (PQKAACPHQESQSHGPPKESRPSIQLPRTGSLLPQLSD) are disordered. The span at 437–453 (PSIQLPRTGSLLPQLSD) shows a compositional bias: polar residues.

Belongs to the CFAP157 family. Interacts with TUBB and TUBA4A. Interacts with CEP350.

It is found in the cytoplasm. The protein localises to the cytoskeleton. Its subcellular location is the cilium basal body. Functionally, specifically required during spermatogenesis for flagellum morphogenesis and sperm motility. May be required to suppress the formation of supernumerary axonemes and ensure a correct ultrastructure. This chain is Cilia- and flagella-associated protein 157, found in Homo sapiens (Human).